Reading from the N-terminus, the 72-residue chain is SRY-related protein ADW5 (72 aa).

Positions 1–69 (VKRPMNAFMV…KHMADYPDYK (69 aa)) form a DNA-binding region, HMG box.

It is found in the nucleus. This chain is SRY-related protein ADW5, found in Alligator mississippiensis (American alligator).